Consider the following 337-residue polypeptide: Deoxyhypusine hydroxylase (337 aa).

HEAT-like PBS-type repeat units follow at residues 73-99 (LKHE…VLSD) and 106-132 (CRHE…YRDR). Residues His75, Glu76, His108, and Glu109 each contribute to the Fe cation site. The segment covering 156-165 (AERQKEKLRP) has biased composition (basic and acidic residues). The disordered stretch occupies residues 156–183 (AERQKEKLRPSDFASIDPAPPMPESDKE). 3 HEAT-like PBS-type repeats span residues 202 to 235 (SRYR…GLSD), 240 to 266 (FRHE…ALSN), and 273 to 300 (VRHE…FLHD). Fe cation-binding residues include His242, Glu243, His275, and Glu276.

The protein belongs to the deoxyhypusine hydroxylase family. It depends on Fe(2+) as a cofactor.

The protein resides in the cytoplasm. It is found in the nucleus. The catalysed reaction is [eIF5A protein]-deoxyhypusine + AH2 + O2 = [eIF5A protein]-hypusine + A + H2O. It participates in protein modification; eIF5A hypusination. In terms of biological role, catalyzes the hydroxylation of the N(6)-(4-aminobutyl)-L-lysine intermediate to form hypusine, an essential post-translational modification only found in mature eIF-5A factor. The sequence is that of Deoxyhypusine hydroxylase from Gibberella zeae (strain ATCC MYA-4620 / CBS 123657 / FGSC 9075 / NRRL 31084 / PH-1) (Wheat head blight fungus).